We begin with the raw amino-acid sequence, 236 residues long: Small ribosomal subunit protein uS2c (236 aa).

The protein belongs to the universal ribosomal protein uS2 family.

Its subcellular location is the plastid. It localises to the chloroplast. This is Small ribosomal subunit protein uS2c (rps2) from Buxus microphylla (Littleleaf boxwood).